Here is a 250-residue protein sequence, read N- to C-terminus: Triosephosphate isomerase (250 aa).

9 to 11 contacts substrate; that stretch reads NWK. H95 functions as the Electrophile in the catalytic mechanism. E167 (proton acceptor) is an active-site residue. Substrate-binding positions include G173, S213, and 234 to 235; that span reads GG.

This sequence belongs to the triosephosphate isomerase family. As to quaternary structure, homodimer.

It is found in the cytoplasm. It carries out the reaction D-glyceraldehyde 3-phosphate = dihydroxyacetone phosphate. It functions in the pathway carbohydrate biosynthesis; gluconeogenesis. Its pathway is carbohydrate degradation; glycolysis; D-glyceraldehyde 3-phosphate from glycerone phosphate: step 1/1. Involved in the gluconeogenesis. Catalyzes stereospecifically the conversion of dihydroxyacetone phosphate (DHAP) to D-glyceraldehyde-3-phosphate (G3P). This Herpetosiphon aurantiacus (strain ATCC 23779 / DSM 785 / 114-95) protein is Triosephosphate isomerase.